Reading from the N-terminus, the 929-residue chain is DNA mismatch repair protein MutS (929 aa).

Residues 22–46 (PAAPRSTGSAAAPPPSPAVLDDRSG) form a disordered region. Residues 23 to 32 (AAPRSTGSAA) are compositionally biased toward low complexity. 678–685 (GPNMAGKS) contributes to the ATP binding site.

The protein belongs to the DNA mismatch repair MutS family.

In terms of biological role, this protein is involved in the repair of mismatches in DNA. It is possible that it carries out the mismatch recognition step. This protein has a weak ATPase activity. In Rhodospirillum rubrum (strain ATCC 11170 / ATH 1.1.1 / DSM 467 / LMG 4362 / NCIMB 8255 / S1), this protein is DNA mismatch repair protein MutS.